A 350-amino-acid polypeptide reads, in one-letter code: Vetispiradiene synthase 3 (350 aa).

Mg(2+) contacts are provided by aspartate 103, aspartate 107, aspartate 246, threonine 250, and glutamate 254. The short motif at 103-107 is the DDXXD motif element; sequence DDTFD.

The protein belongs to the terpene synthase family. Tpsa subfamily. Mg(2+) serves as cofactor.

The protein localises to the cytoplasm. The catalysed reaction is (2E,6E)-farnesyl diphosphate = (-)-vetispiradiene + diphosphate. The protein operates within secondary metabolite biosynthesis; terpenoid biosynthesis. Sesquiterpene synthase that catalyzes the formation of vetispiradiene from trans,trans-farnesyl diphosphate. The initial internal cyclization produces the monocyclic intermediate germacrene A. The polypeptide is Vetispiradiene synthase 3 (Hyoscyamus muticus (Egyptian henbane)).